The following is a 2924-amino-acid chain: Probable polyketide synthase 6 (2924 aa).

A Ketosynthase family 3 (KS3) domain is found at 11-442 (EKGVAIVGIG…GSNCCLLISE (432 aa)). Residues cysteine 181, histidine 323, and histidine 362 each act as for beta-ketoacyl synthase activity in the active site. Positions 635-668 (GVNPSFILGHSLGEISASYCSGMIDLDTFCYTVY) are acyl/malonyl transferase. Serine 645 (for acyl/malonyl transferase activity) is an active-site residue. Residues 925 to 1047 (IDHLGLSNSY…SNFQLLDHGN (123 aa)) are N-terminal hotdog fold. The 286-residue stretch at 925 to 1210 (IDHLGLSNSY…CKSLIPIKDS (286 aa)) folds into the PKS/mFAS DH domain. Histidine 959 (proton acceptor; for dehydratase activity) is an active-site residue. The interval 1064 to 1210 (NLSKLTKNEL…CKSLIPIKDS (147 aa)) is C-terminal hotdog fold. Catalysis depends on aspartate 1122, which acts as the Proton donor; for dehydratase activity. The Carrier domain occupies 2431 to 2508 (TGNKNIDELF…ISIKMILNSL (78 aa)). Position 2468 is an O-(pantetheine 4'-phosphoryl)serine (serine 2468). The helical transmembrane segment at 2551–2571 (KIILLTGTTGFLGGFLLFNML) threads the bilayer.

It depends on pantetheine 4'-phosphate as a cofactor.

Its subcellular location is the membrane. Probable polyketide synthase. This chain is Probable polyketide synthase 6 (pks6), found in Dictyostelium discoideum (Social amoeba).